A 525-amino-acid chain; its full sequence is MSEYLQQIAKRRTFAIISHPDAGKTTITEKMLLFGNAIKTAGTVKAKKSGIHATSDWMEMEKQRGISITTSVMQFPYNGRIINLLDTPGHEDFSEDTYRTLTAVDSALMVVDAVKGVEDRTIKLMNVCRLRDTPIVTFMNKFDRDTRDPLELLDEVENILKIKCAPMNWPIGMGKYFKGVYDLYNDEVTLFETGHGHEIYPYKKIKGLANAKDAIGIDLYEDLEMEIDLVRGASHEFDEQEFLEGNLTPVYFGTALSNFGVKEMMDGFTRYAPAPQHREADQRVVAADEQKLTGFVFKIQANMDEKHRDRIAFFRICSGKYEKGMKIFHERTGKQMQISKALTFMAGEREQVEEGYAGDIIGFHNHGSIQIGDSFTQGEKLKFKGIPNFAPEIFKRVKLNDPLKMKALQKGLVQLSEEGATQVFKPFISNDLVLGAVGVLQFDVVAQRLASEYNVKCSYEGVNVTLARWIFCNDEKKLNDFKKKYEVNLAYDGAGYLTYLAPTGVNLQLAQEKNPDIIFSATREH.

The 268-residue stretch at 9–276 folds into the tr-type G domain; it reads AKRRTFAIIS…GFTRYAPAPQ (268 aa). GTP contacts are provided by residues 18 to 25, 86 to 90, and 140 to 143; these read SHPDAGKT, DTPGH, and NKFD.

This sequence belongs to the TRAFAC class translation factor GTPase superfamily. Classic translation factor GTPase family. PrfC subfamily.

The protein localises to the cytoplasm. Increases the formation of ribosomal termination complexes and stimulates activities of RF-1 and RF-2. It binds guanine nucleotides and has strong preference for UGA stop codons. It may interact directly with the ribosome. The stimulation of RF-1 and RF-2 is significantly reduced by GTP and GDP, but not by GMP. This is Peptide chain release factor 3 from Francisella tularensis subsp. novicida (strain U112).